The sequence spans 1412 residues: Cardiac-enriched FHL2-interacting protein (1412 aa).

7 disordered regions span residues Val-106–Ala-177, Val-202–Pro-443, Leu-460–Pro-500, Tyr-517–His-848, Ser-877–Thr-923, Glu-935–Thr-1255, and Arg-1344–Ser-1412. At Thr-120 the chain carries Phosphothreonine. The span at Ser-135–Ser-145 shows a compositional bias: low complexity. The segment covering Arg-161 to Lys-171 has biased composition (pro residues). The segment covering Val-202–Ser-212 has biased composition (polar residues). 2 stretches are compositionally biased toward basic and acidic residues: residues Trp-285–Ala-299 and Lys-306–Leu-316. Ser-328 is modified (phosphoserine). The span at Ser-343–Gly-352 shows a compositional bias: polar residues. Residues Lys-378–Thr-389 are compositionally biased toward basic residues. Ser-473 carries the post-translational modification Phosphoserine. 2 stretches are compositionally biased toward basic and acidic residues: residues Gln-482–Lys-496 and Gly-525–Gln-538. The span at Ser-587–Asn-612 shows a compositional bias: low complexity. Basic and acidic residues predominate over residues Gly-632 to Pro-641. 3 stretches are compositionally biased toward polar residues: residues Asn-670–Glu-679, Gly-687–Phe-697, and Ser-712–Arg-722. Over residues Phe-728–Glu-741 the composition is skewed to low complexity. Positions Gln-753 to Arg-799 are enriched in basic and acidic residues. Ser-813 bears the Phosphoserine mark. The segment covering Ala-826–Asp-837 has biased composition (basic and acidic residues). Composition is skewed to polar residues over residues Ala-904–Pro-921, Gln-943–Gly-953, and Ala-1047–Ala-1066. Positions Arg-1164–Lys-1175 are enriched in basic residues. Over residues Ser-1176–Pro-1203 the composition is skewed to basic and acidic residues. Residues Asp-1401–Ser-1412 are compositionally biased toward acidic residues.

Interacts with FHL2. In terms of tissue distribution, expressed in the heart and skeletal muscle (at protein level).

The protein localises to the cytoplasm. It localises to the myofibril. The protein resides in the sarcomere. Its subcellular location is the z line. Functionally, plays an important role in cardiomyocyte hypertrophy via activation of the calcineurin/NFAT signaling pathway. This Mus musculus (Mouse) protein is Cardiac-enriched FHL2-interacting protein.